A 170-amino-acid polypeptide reads, in one-letter code: Large ribosomal subunit protein uL5 (170 aa).

It belongs to the universal ribosomal protein uL5 family. Part of the 50S ribosomal subunit; contacts the 5S rRNA and probably tRNA. Forms a bridge to the 30S subunit in the 70S ribosome.

In terms of biological role, this is one of the proteins that bind and probably mediate the attachment of the 5S RNA into the large ribosomal subunit, where it forms part of the central protuberance. In the 70S ribosome it contacts protein S13 of the 30S subunit (bridge B1b), connecting the 2 subunits; this bridge is implicated in subunit movement. May contact the P site tRNA; the 5S rRNA and some of its associated proteins might help stabilize positioning of ribosome-bound tRNAs. The protein is Large ribosomal subunit protein uL5 of Thermoplasma volcanium (strain ATCC 51530 / DSM 4299 / JCM 9571 / NBRC 15438 / GSS1).